The following is a 265-amino-acid chain: Anamorsin homolog (265 aa).

The interval 1-147 (MDAAKMYGAV…WKIGSSFALK (147 aa)) is N-terminal SAM-like domain. Residues 147–176 (KKVVKSSPKVQIDFDSDLIDENSLLSEEDL) form a linker region. Positions 186, 195, 198, and 200 each coordinate [2Fe-2S] cluster. The fe-S binding site A stretch occupies residues 186–200 (CEIGPTRKACKNCSC). [4Fe-4S] cluster is bound by residues Cys226, Cys229, Cys237, and Cys240. Short sequence motifs (cx2C motif) lie at residues 226 to 229 (CGSC) and 237 to 240 (CSTC). The fe-S binding site B stretch occupies residues 226–240 (CGSCGLGDAFRCSTC).

This sequence belongs to the anamorsin family. As to quaternary structure, monomer. [2Fe-2S] cluster is required as a cofactor. Requires [4Fe-4S] cluster as cofactor.

It is found in the cytoplasm. Its subcellular location is the mitochondrion intermembrane space. In terms of biological role, component of the cytosolic iron-sulfur (Fe-S) protein assembly (CIA) machinery. Required for the maturation of extramitochondrial Fe-S proteins. Part of an electron transfer chain functioning in an early step of cytosolic Fe-S biogenesis, facilitating the de novo assembly of a [4Fe-4S] cluster on the cytosolic Fe-S scaffold complex. Electrons are transferred from NADPH via a FAD- and FMN-containing diflavin oxidoreductase. Together with the diflavin oxidoreductase, also required for the assembly of the diferric tyrosyl radical cofactor of ribonucleotide reductase (RNR), probably by providing electrons for reduction during radical cofactor maturation in the catalytic small subunit. The protein is Anamorsin homolog of Medicago truncatula (Barrel medic).